The primary structure comprises 186 residues: ATP synthase subunit b, chloroplastic (186 aa).

Residues 27–49 (LATNPINLSVVLGVLIFFGKGVL) form a helical membrane-spanning segment.

The protein belongs to the ATPase B chain family. As to quaternary structure, F-type ATPases have 2 components, F(1) - the catalytic core - and F(0) - the membrane proton channel. F(1) has five subunits: alpha(3), beta(3), gamma(1), delta(1), epsilon(1). F(0) has four main subunits: a(1), b(1), b'(1) and c(10-14). The alpha and beta chains form an alternating ring which encloses part of the gamma chain. F(1) is attached to F(0) by a central stalk formed by the gamma and epsilon chains, while a peripheral stalk is formed by the delta, b and b' chains.

The protein localises to the plastid. Its subcellular location is the chloroplast thylakoid membrane. F(1)F(0) ATP synthase produces ATP from ADP in the presence of a proton or sodium gradient. F-type ATPases consist of two structural domains, F(1) containing the extramembraneous catalytic core and F(0) containing the membrane proton channel, linked together by a central stalk and a peripheral stalk. During catalysis, ATP synthesis in the catalytic domain of F(1) is coupled via a rotary mechanism of the central stalk subunits to proton translocation. In terms of biological role, component of the F(0) channel, it forms part of the peripheral stalk, linking F(1) to F(0). This Illicium oligandrum (Star anise) protein is ATP synthase subunit b, chloroplastic.